The primary structure comprises 233 residues: H-2 class II histocompatibility antigen, A-S alpha chain (233 aa).

Positions 1–88 (EDDIEADHVG…KRSNSTPATN (88 aa)) are alpha-1. At 1–195 (EDDIEADHVG…IPAPMSELTE (195 aa)) the chain is on the extracellular side. The interval 89 to 182 (EAPQATVFPK…GLEEPVLKHW (94 aa)) is alpha-2. One can recognise an Ig-like C1-type domain in the interval 91–183 (PQATVFPKSP…LEEPVLKHWE (93 aa)). A disulfide bridge connects residues Cys-111 and Cys-167. Asn-122 carries N-linked (GlcNAc...) asparagine glycosylation. Residues 183–195 (EPEIPAPMSELTE) form a connecting peptide region. Residues 196–221 (TVVCALGLSVGLVGIVVGTIFIIQGL) traverse the membrane as a helical segment. Over 222 to 233 (RSGGTSRHPGPL) the chain is Cytoplasmic.

This sequence belongs to the MHC class II family.

Its subcellular location is the membrane. The protein is H-2 class II histocompatibility antigen, A-S alpha chain (H2-Aa) of Mus musculus (Mouse).